The chain runs to 361 residues: MKGLILVGGYGTRLRPLTLTVPKPLVEFCNRPMILHQIEALAAAGVTDIVLAVNYRPEVMVETLKKYEKQYGVSITFSVETEPLGTAGPLKLAEKVLKKDNSPFFVLNSDVICEYPFKELAAFHRAHGGKGTIVATKVDEPSKYGVIVHDIATPNLIDRFVEKPVEFVGNRINAGLYILNPEVIDLIELRPTSIEKETFPILVEQKSLYSFDLEGYWMDVGQPKDFLAGTVLYLNSLSKRHPEQLAKGDNIVGNVIIDPSAKISGSAKLGPDVVIGPNVTIGEGVRITRSVVLSDSTINDHSLVKSTIVGWHSTVGKWCRLEGCSVLGDDVEVKDEVYVNGGKVLPHKSISANVPKEAIIM.

Belongs to the transferase hexapeptide repeat family.

Its subcellular location is the cytoplasm. The enzyme catalyses alpha-D-mannose 1-phosphate + GTP + H(+) = GDP-alpha-D-mannose + diphosphate. It participates in nucleotide-sugar biosynthesis; GDP-alpha-D-mannose biosynthesis; GDP-alpha-D-mannose from alpha-D-mannose 1-phosphate (GTP route): step 1/1. In terms of biological role, involved in cell wall synthesis where it is required for glycosylation. Involved in cell cycle progression through cell-size checkpoint. This is Mannose-1-phosphate guanyltransferase (MPG1) from Eremothecium gossypii (strain ATCC 10895 / CBS 109.51 / FGSC 9923 / NRRL Y-1056) (Yeast).